The primary structure comprises 888 residues: Patched domain-containing protein 1 (888 aa).

The helical transmembrane segment at 20–40 (FIASHPVFFASAPVLISILLG) threads the bilayer. Residues asparagine 77, asparagine 133, and asparagine 167 are each glycosylated (N-linked (GlcNAc...) asparagine). An SSD domain is found at 268-427 (SERYLVTSLI…LSFYGSSLVF (160 aa)). A run of 2 helical transmembrane segments spans residues 273-293 (VTSL…QDCV) and 298-318 (WLGL…AGII). Residues asparagine 319 and asparagine 326 are each glycosylated (N-linked (GlcNAc...) asparagine). A run of 4 helical transmembrane segments spans residues 328 to 348 (TFLG…FEML), 373 to 393 (LSFS…ASPF), 407 to 427 (CIAI…SLVF), and 502 to 522 (PFVV…YLQV). Residues asparagine 568, asparagine 599, and asparagine 608 are each glycosylated (N-linked (GlcNAc...) asparagine). A run of 2 helical transmembrane segments spans residues 707–727 (ALFL…NVWI) and 738–758 (VIGF…LCLI). The N-linked (GlcNAc...) asparagine glycan is linked to asparagine 762. Residues 795 to 815 (GVAILQSYLCYIVGLFPLAAV) form a helical membrane-spanning segment. N-linked (GlcNAc...) asparagine glycosylation occurs at asparagine 818. Residues 826-846 (CLFLIAFVTFFHCFAILPVIL) traverse the membrane as a helical segment.

This sequence belongs to the patched family. In terms of tissue distribution, broadly expressed in the brain. Selectively expressed in the thalamic reticular nucleus (TRN) in early development and continues to be enriched in this structure throughout adult life.

The protein resides in the cell membrane. It localises to the cell projection. The protein localises to the dendritic spine. Its function is as follows. Required for the development and function of the thalamic reticular nucleus (TRN), a part of the thalamus that is critical for thalamocortical transmission, generation of sleep rhythms, sensorimotor processing and attention. Can bind cholesterol in vitro. In Mus musculus (Mouse), this protein is Patched domain-containing protein 1.